Consider the following 336-residue polypeptide: tRNA(Ile)-lysidine synthase (336 aa).

40 to 45 (SGGQDS) provides a ligand contact to ATP.

It belongs to the tRNA(Ile)-lysidine synthase family.

It localises to the cytoplasm. The enzyme catalyses cytidine(34) in tRNA(Ile2) + L-lysine + ATP = lysidine(34) in tRNA(Ile2) + AMP + diphosphate + H(+). In terms of biological role, ligates lysine onto the cytidine present at position 34 of the AUA codon-specific tRNA(Ile) that contains the anticodon CAU, in an ATP-dependent manner. Cytidine is converted to lysidine, thus changing the amino acid specificity of the tRNA from methionine to isoleucine. This chain is tRNA(Ile)-lysidine synthase, found in Prochlorococcus marinus (strain SARG / CCMP1375 / SS120).